A 539-amino-acid polypeptide reads, in one-letter code: MYGGDDYGNNAEYYDEYAHTGDPQLDMEYERNYYASRMPENVKYFLINFCQAIKEGTLYDIQNMYENTFPQISDHHFDKSAWPDEQEVGPIVDNDKVFLILYKELYYRHIHARIPGGPKLDQRINSFFNYCDFFNLIISSQNPVMLELPDIWLWELVDEFVYQFQNFAQYRARLTDKSQDEIQQLCVNHSNVWSILCILNVLHSLVDISNIKKQLEAISQGADPQTVAGDFGKLSFYKMLGYFSLVGLLRVHSLLGDYYQAIKVLEPIEIHKKSAYSHIPACQISTSYYVGFAYMMMRRYADAIRTFSDILLYIQRTKQLYSTRSYQNDQINKQAEQMYHLLAICLVLHPQCIDESIQQVLREKNYHDAMFKMQCGDLDVFKSFFVFACPRFVSPCPPAADAPMEDYVKDPMEHQLMVFMDEVRQQKDLPTTRSYLKLYTTLPLAKLASFIDPNASDDDVSKLLIRLLCFKHKMRNLVWSKGPSGLEGAFKSGSELDFYIDDDMIHIADTKVSHRYGDFFVRKILKFNDLNRKLKKITI.

Residues 306-514 form the PCI domain; it reads TFSDILLYIQ…IHIADTKVSH (209 aa).

It belongs to the eIF-3 subunit L family. Component of the eukaryotic translation initiation factor 3 (eIF-3) complex. The eIF-3 complex interacts with pix.

It localises to the cytoplasm. Component of the eukaryotic translation initiation factor 3 (eIF-3) complex, which is involved in protein synthesis of a specialized repertoire of mRNAs and, together with other initiation factors, stimulates binding of mRNA and methionyl-tRNAi to the 40S ribosome. The eIF-3 complex specifically targets and initiates translation of a subset of mRNAs involved in cell proliferation. The polypeptide is Eukaryotic translation initiation factor 3 subunit L (Drosophila ananassae (Fruit fly)).